The following is a 174-amino-acid chain: Co-chaperone protein HscB (174 aa).

Residues 2–74 (DYFTLFGLPA…LKRAEYMLSL (73 aa)) enclose the J domain.

This sequence belongs to the HscB family. In terms of assembly, interacts with HscA and stimulates its ATPase activity. Interacts with IscU.

Co-chaperone involved in the maturation of iron-sulfur cluster-containing proteins. Seems to help targeting proteins to be folded toward HscA. This is Co-chaperone protein HscB from Yersinia pseudotuberculosis serotype O:1b (strain IP 31758).